We begin with the raw amino-acid sequence, 1396 residues long: MSDASISGSEPELDPEDMEEEEEDDEDDDEEEEEEEDEEDNDGDDEDDKQDINEKSQNAALGEDSPEQGEEGWKRSTTSGQSGQESDEAKKKRLQKPANLRRNIRKLLREDQLESVTKTAQQEELERRKRLEQQRKDYPLPLTLPPVSLDFLQEEIELRAADVSQLVKSQEIICLDSSSGESDDEGKVKSHSIKDEIIELSSGEEDNLQISDNADSTNEVDGDITTENSGSHVNDALNQADHLGRVLVNINHPPNEKDIFLAPQLARAVKSHQIGGIRFLYDNLVESLERFSGSSGFGCILAHSMGLGKTLQVISFLDVLFQHTSAKTVLAIVPVNTLQNWLAEFNMWLPPPESLPKDHNQELVQPRAFKVHTMNDEHKTTAARAKVVNDWATDGGVLLMGYEMYRLLSLKKSFTAGRKKKSKKAAGPVIIDLDEEDRQQEMLKGIEKALSRPGPDVVICDEGHRIKNCHASTSQALKNIRSRRRVVLTGYPLQNNLIEYWCMVDFVRPDFLGTRQEFSNMFERPILNGQCVDSTPQDKRLMRYRSHVLHSLLEGFVQRRGHTVLKAQLPFKEEHVILVRLSKIQRDLYTEFMNRFRDAGNSGWLGLNPLKAFCVCCKIWNHPDVLYEALQKENLANEQDLDVEDLGTNNRCNAQSGKIKVEPNSLGALMGETAHTKQLQGIVLNPSHEKANQVVTYEWAKEILSDYIPGQLQNSPKMVLLFHLIEESMRMGDKILVFSQSLSTLSIMEEFLAKRKMPIPAGSDGQEGHTWIRNVNYYRLDGSTSASERERLINQFNDPSNEKVWLFLLSTRAGCLGVNLIGANRVVVFDASWNPCHDAQAVCRVYRYGQRKPCYIYRLVSDFTLEKKIYDRQITKQGMSDRVVDDLNPEVNFTRREVENLLHFVEEEPDASRQHLDSSSFHEAVLQKACLQYPHLITKEPFQHESLLLDRKEQKLTLAEKKAAKRGYEEEKRASVPYTRPSYTQYYPAPDHNLGNIPAFSQRHWRPLMKGDDRPVASVRPLQSTPIPMLPRHVSVNHPGSASASVHPYNFPVNYLQRAGVLVQKVVTTTDIVIPGMTTSTDVQARISAGESIHVIRGTKGTYIRTSDGRIFAIRASGKQKSGEVRRQATSGAQGSSAPYLSNGRHSTSSPSQQDSEDPPRPLSPDSPEILNELQKYADAAAARGSHTAPQLQNLGLHHQGINPAPKLQPRKRKDPQDQSSHWPSNKRNPYSQLSYPNTGGFGVTPSTMNHNLVRSSNPVFMGPGGGSSHFQLPSLLSDPQTGLPLVQDSLLTHSSGTSSAPSVPPHYLLPRGFPLPFSQSLLPQTRMFAPYPSQILNRGLPTNNPASTFPGYLSSHSNYQASPGTSSRPLPSGETELGSCEEDGRDDDVVEVTGE.

Positions 1–103 (MSDASISGSE…LQKPANLRRN (103 aa)) are disordered. The segment covering 11 to 49 (PELDPEDMEEEEEDDEDDDEEEEEEEDEEDNDGDDEDDK) has biased composition (acidic residues). Residues 75–84 (RSTTSGQSGQ) show a composition bias toward polar residues. The 221-residue stretch at 290 to 510 (RFSGSSGFGC…WCMVDFVRPD (221 aa)) folds into the Helicase ATP-binding domain. 303–310 (HSMGLGKT) contacts ATP. Positions 461-464 (DEGH) match the DEAH box motif. The short motif at 549–553 (LHSLL) is the LXXLL motif 1 element. Residues 717–891 (KMVLLFHLIE…RVVDDLNPEV (175 aa)) form the Helicase C-terminal domain. Disordered stretches follow at residues 1117-1168 (SGKQ…PDSP) and 1194-1250 (NLGL…STMN). 2 stretches are compositionally biased toward polar residues: residues 1128–1148 (QATSGAQGSSAPYLSNGRHST) and 1218–1238 (DQSSHWPSNKRNPYSQLSYPN). The LXXLL motif 2 motif lies at 1273–1277 (LPSLL). The interval 1340-1396 (GLPTNNPASTFPGYLSSHSNYQASPGTSSRPLPSGETELGSCEEDGRDDDVVEVTGE) is disordered. A compositionally biased stretch (polar residues) spans 1355 to 1370 (SSHSNYQASPGTSSRP). Acidic residues predominate over residues 1380–1396 (SCEEDGRDDDVVEVTGE).

The protein belongs to the SNF2/RAD54 helicase family.

It localises to the nucleus. It carries out the reaction ATP + H2O = ADP + phosphate + H(+). DNA helicase that modulates androgen receptor (AR)-dependent transactivation in a promoter-dependent manner. This chain is Helicase ARIP4 (rad54l2), found in Xenopus tropicalis (Western clawed frog).